A 279-amino-acid polypeptide reads, in one-letter code: Methylthioribulose-1-phosphate dehydratase (279 aa).

Position 132 (C132) interacts with substrate. Zn(2+)-binding residues include H150 and H152. E175 (proton donor/acceptor) is an active-site residue. A Zn(2+)-binding site is contributed by H240.

It belongs to the aldolase class II family. MtnB subfamily. Zn(2+) serves as cofactor.

The protein resides in the cytoplasm. It carries out the reaction 5-(methylsulfanyl)-D-ribulose 1-phosphate = 5-methylsulfanyl-2,3-dioxopentyl phosphate + H2O. It participates in amino-acid biosynthesis; L-methionine biosynthesis via salvage pathway; L-methionine from S-methyl-5-thio-alpha-D-ribose 1-phosphate: step 2/6. Catalyzes the dehydration of methylthioribulose-1-phosphate (MTRu-1-P) into 2,3-diketo-5-methylthiopentyl-1-phosphate (DK-MTP-1-P). The chain is Methylthioribulose-1-phosphate dehydratase from Candida tropicalis (strain ATCC MYA-3404 / T1) (Yeast).